The following is a 647-amino-acid chain: Macrolide export ATP-binding/permease protein MacB (647 aa).

In terms of domain architecture, ABC transporter spans 7–245 (IRLEDICKTF…EATLQPHEEI (239 aa)). ATP is bound at residue 43 to 50 (GASGSGKS). A run of 4 helical transmembrane segments spans residues 274 to 294 (VLTLLGIIIGVSSVVTMLAIG), 529 to 549 (VAAISLLVGGIGVMNIMLVSV), 573 to 593 (FIIEALSVSAIGGAIGVILGL), and 610 to 630 (FGPVLLAFACAFATGLIFGFL).

This sequence belongs to the ABC transporter superfamily. Macrolide exporter (TC 3.A.1.122) family. Homodimer.

It localises to the cell inner membrane. Non-canonical ABC transporter that contains transmembrane domains (TMD), which form a pore in the inner membrane, and an ATP-binding domain (NBD), which is responsible for energy generation. Confers resistance against macrolides. The chain is Macrolide export ATP-binding/permease protein MacB from Brucella melitensis biotype 1 (strain ATCC 23456 / CCUG 17765 / NCTC 10094 / 16M).